Here is a 33-residue protein sequence, read N- to C-terminus: Photosystem II reaction center protein Psb30 (33 aa).

Residues 5 to 25 (VIAQLTVLTLMVVSGPLVIVL) form a helical membrane-spanning segment.

This sequence belongs to the Psb30/Ycf12 family. In terms of assembly, PSII is composed of 1 copy each of membrane proteins PsbA, PsbB, PsbC, PsbD, PsbE, PsbF, PsbH, PsbI, PsbJ, PsbK, PsbL, PsbM, PsbT, PsbX, PsbY, PsbZ, Psb30/Ycf12, peripheral proteins of the oxygen-evolving complex and a large number of cofactors. It forms dimeric complexes.

It is found in the plastid. The protein localises to the chloroplast thylakoid membrane. In terms of biological role, a core subunit of photosystem II (PSII), probably helps stabilize the reaction center. This is Photosystem II reaction center protein Psb30 from Pinus koraiensis (Korean pine).